A 465-amino-acid polypeptide reads, in one-letter code: ATP synthase subunit beta (465 aa).

152 to 159 contributes to the ATP binding site; that stretch reads GGAGVGKT.

The protein belongs to the ATPase alpha/beta chains family. F-type ATPases have 2 components, CF(1) - the catalytic core - and CF(0) - the membrane proton channel. CF(1) has five subunits: alpha(3), beta(3), gamma(1), delta(1), epsilon(1). CF(0) has three main subunits: a(1), b(2) and c(9-12). The alpha and beta chains form an alternating ring which encloses part of the gamma chain. CF(1) is attached to CF(0) by a central stalk formed by the gamma and epsilon chains, while a peripheral stalk is formed by the delta and b chains.

It is found in the cell inner membrane. The catalysed reaction is ATP + H2O + 4 H(+)(in) = ADP + phosphate + 5 H(+)(out). Produces ATP from ADP in the presence of a proton gradient across the membrane. The catalytic sites are hosted primarily by the beta subunits. The chain is ATP synthase subunit beta from Campylobacter concisus (strain 13826).